The following is a 159-amino-acid chain: SsrA-binding protein (159 aa).

The disordered stretch occupies residues 132-159 (KDFDKRHTEKERDSDREIQRAMRHGKDD).

Belongs to the SmpB family.

Its subcellular location is the cytoplasm. In terms of biological role, required for rescue of stalled ribosomes mediated by trans-translation. Binds to transfer-messenger RNA (tmRNA), required for stable association of tmRNA with ribosomes. tmRNA and SmpB together mimic tRNA shape, replacing the anticodon stem-loop with SmpB. tmRNA is encoded by the ssrA gene; the 2 termini fold to resemble tRNA(Ala) and it encodes a 'tag peptide', a short internal open reading frame. During trans-translation Ala-aminoacylated tmRNA acts like a tRNA, entering the A-site of stalled ribosomes, displacing the stalled mRNA. The ribosome then switches to translate the ORF on the tmRNA; the nascent peptide is terminated with the 'tag peptide' encoded by the tmRNA and targeted for degradation. The ribosome is freed to recommence translation, which seems to be the essential function of trans-translation. The sequence is that of SsrA-binding protein from Pseudomonas aeruginosa (strain LESB58).